The following is a 38-amino-acid chain: Photosystem II reaction center protein L (38 aa).

A helical membrane pass occupies residues 17–37 (SLYWGLLLIFVLAVLFSNYFF).

The protein belongs to the PsbL family. PSII is composed of 1 copy each of membrane proteins PsbA, PsbB, PsbC, PsbD, PsbE, PsbF, PsbH, PsbI, PsbJ, PsbK, PsbL, PsbM, PsbT, PsbX, PsbY, PsbZ, Psb30/Ycf12, at least 3 peripheral proteins of the oxygen-evolving complex and a large number of cofactors. It forms dimeric complexes.

It localises to the plastid. The protein resides in the chloroplast thylakoid membrane. Functionally, one of the components of the core complex of photosystem II (PSII). PSII is a light-driven water:plastoquinone oxidoreductase that uses light energy to abstract electrons from H(2)O, generating O(2) and a proton gradient subsequently used for ATP formation. It consists of a core antenna complex that captures photons, and an electron transfer chain that converts photonic excitation into a charge separation. This subunit is found at the monomer-monomer interface and is required for correct PSII assembly and/or dimerization. In Ananas comosus (Pineapple), this protein is Photosystem II reaction center protein L.